Here is a 300-residue protein sequence, read N- to C-terminus: Ribosomal protein L11 methyltransferase (300 aa).

S-adenosyl-L-methionine-binding residues include Thr-152, Gly-173, Asp-195, and Asn-234.

This sequence belongs to the methyltransferase superfamily. PrmA family.

It is found in the cytoplasm. It catalyses the reaction L-lysyl-[protein] + 3 S-adenosyl-L-methionine = N(6),N(6),N(6)-trimethyl-L-lysyl-[protein] + 3 S-adenosyl-L-homocysteine + 3 H(+). Functionally, methylates ribosomal protein L11. This chain is Ribosomal protein L11 methyltransferase, found in Burkholderia vietnamiensis (strain G4 / LMG 22486) (Burkholderia cepacia (strain R1808)).